The following is a 218-amino-acid chain: Peroxiredoxin-like 2A (218 aa).

The thioredoxin fold stretch occupies residues 3–101 (MWSIGAGAIG…DELGVPLYAV (99 aa)). Residues cysteine 74 and cysteine 77 each act as redox-active in the active site.

Belongs to the peroxiredoxin-like PRXL2 family. PRXL2A subfamily.

It localises to the cytoplasm. Its subcellular location is the secreted. In terms of biological role, involved in redox regulation of the cell. Acts as an antioxidant. Inhibits TNFSF11-induced NFKB1 and JUN activation and osteoclast differentiation. May affect bone resorption and help to maintain bone mass. Acts as a negative regulator of macrophage-mediated inflammation by inhibiting macrophage production of inflammatory cytokines, probably through suppression of the MAPK signaling pathway. The sequence is that of Peroxiredoxin-like 2A (PRXL2A) from Bos taurus (Bovine).